Reading from the N-terminus, the 509-residue chain is 2-isopropylmalate synthase (509 aa).

One can recognise a Pyruvate carboxyltransferase domain in the interval 5 to 267; that stretch reads IQIFDTTLRD…QTALNLEETK (263 aa). Residues Asp14, His202, His204, and Asn238 each coordinate Mn(2+). The tract at residues 391-509 is regulatory domain; it reads KLETLQLQYV…AAENVEKVGN (119 aa).

Belongs to the alpha-IPM synthase/homocitrate synthase family. LeuA type 1 subfamily. In terms of assembly, homodimer. The cofactor is Mn(2+).

It is found in the cytoplasm. It carries out the reaction 3-methyl-2-oxobutanoate + acetyl-CoA + H2O = (2S)-2-isopropylmalate + CoA + H(+). Its pathway is amino-acid biosynthesis; L-leucine biosynthesis; L-leucine from 3-methyl-2-oxobutanoate: step 1/4. Its function is as follows. Catalyzes the condensation of the acetyl group of acetyl-CoA with 3-methyl-2-oxobutanoate (2-ketoisovalerate) to form 3-carboxy-3-hydroxy-4-methylpentanoate (2-isopropylmalate). This chain is 2-isopropylmalate synthase, found in Staphylococcus aureus (strain USA300).